The sequence spans 86 residues: CLAVATA3/ESR (CLE)-related protein 8 (86 aa).

The first 24 residues, 1–24 (MKVLKRDSMLLLITLYFLLTTSMA), serve as a signal peptide directing secretion. The interval 43-86 (DLKQNKAKPHLPNLFRTMRRVPTGPNPLHHISPPQPGSLNYARN) is disordered. 2 positions are modified to hydroxyproline: Pro64 and Pro67. A glycan (O-linked (Ara...) hydroxyproline) is linked at Pro67.

Belongs to the CLV3/ESR signal peptide family. The O-glycosylation (arabinosylation) of the hydroxyproline Pro-67 enhances binding affinity of the CLE8p peptide for its receptor. In terms of tissue distribution, mostly expressed in siliques, and, to a lower extent, in flowers. Expressed in young embryos and endosperm.

The protein resides in the secreted. Its subcellular location is the extracellular space. In terms of biological role, extracellular signal peptide that regulates cell fate. Represses root apical meristem maintenance. Positively regulates the expression of the transcription factor WOX8 and thus, regulates early embryo development. Regulates the transition of protophloem cells from proliferation to differentiation, thus impinging on postembryonic growth capacity of the root meristem; this signaling pathway requires CRN and CLV2. The sequence is that of CLAVATA3/ESR (CLE)-related protein 8 from Arabidopsis thaliana (Mouse-ear cress).